A 122-amino-acid chain; its full sequence is UPF0145 protein BamMC406_5002 (122 aa).

The protein belongs to the UPF0145 family.

In Burkholderia ambifaria (strain MC40-6), this protein is UPF0145 protein BamMC406_5002.